The following is a 208-amino-acid chain: Pyridoxine/pyridoxamine 5'-phosphate oxidase (208 aa).

FMN is bound by residues 53–58 (RTVLLK), 68–69 (YS), lysine 75, and glutamine 100. Lysine 58 provides a ligand contact to substrate. Tyrosine 118, arginine 122, and serine 126 together coordinate substrate. Residues 135-136 (QS) and tryptophan 180 each bind FMN. Position 186 to 188 (186 to 188 (RLH)) interacts with substrate. FMN is bound at residue arginine 190.

Belongs to the pyridoxamine 5'-phosphate oxidase family. As to quaternary structure, homodimer. It depends on FMN as a cofactor.

It catalyses the reaction pyridoxamine 5'-phosphate + O2 + H2O = pyridoxal 5'-phosphate + H2O2 + NH4(+). The catalysed reaction is pyridoxine 5'-phosphate + O2 = pyridoxal 5'-phosphate + H2O2. Its pathway is cofactor metabolism; pyridoxal 5'-phosphate salvage; pyridoxal 5'-phosphate from pyridoxamine 5'-phosphate: step 1/1. It participates in cofactor metabolism; pyridoxal 5'-phosphate salvage; pyridoxal 5'-phosphate from pyridoxine 5'-phosphate: step 1/1. In terms of biological role, catalyzes the oxidation of either pyridoxine 5'-phosphate (PNP) or pyridoxamine 5'-phosphate (PMP) into pyridoxal 5'-phosphate (PLP). The protein is Pyridoxine/pyridoxamine 5'-phosphate oxidase of Xylella fastidiosa (strain 9a5c).